Here is a 307-residue protein sequence, read N- to C-terminus: Ribonuclease Z (307 aa).

Zn(2+)-binding residues include His-61, His-63, Asp-65, His-66, His-138, Asp-208, and His-264. Asp-65 serves as the catalytic Proton acceptor.

This sequence belongs to the RNase Z family. In terms of assembly, homodimer. It depends on Zn(2+) as a cofactor.

The catalysed reaction is Endonucleolytic cleavage of RNA, removing extra 3' nucleotides from tRNA precursor, generating 3' termini of tRNAs. A 3'-hydroxy group is left at the tRNA terminus and a 5'-phosphoryl group is left at the trailer molecule.. Functionally, zinc phosphodiesterase, which displays some tRNA 3'-processing endonuclease activity. Probably involved in tRNA maturation, by removing a 3'-trailer from precursor tRNA. In Pyrococcus horikoshii (strain ATCC 700860 / DSM 12428 / JCM 9974 / NBRC 100139 / OT-3), this protein is Ribonuclease Z.